We begin with the raw amino-acid sequence, 268 residues long: Malonyl-[acyl-carrier protein] O-methyltransferase (268 aa).

The protein belongs to the methyltransferase superfamily.

It carries out the reaction malonyl-[ACP] + S-adenosyl-L-methionine = malonyl-[ACP] methyl ester + S-adenosyl-L-homocysteine. The protein operates within cofactor biosynthesis; biotin biosynthesis. In terms of biological role, converts the free carboxyl group of a malonyl-thioester to its methyl ester by transfer of a methyl group from S-adenosyl-L-methionine (SAM). It allows to synthesize pimeloyl-ACP via the fatty acid synthetic pathway. The polypeptide is Malonyl-[acyl-carrier protein] O-methyltransferase (Prosthecochloris aestuarii (strain DSM 271 / SK 413)).